Consider the following 323-residue polypeptide: Tetraacyldisaccharide 4'-kinase (323 aa).

56–63 is an ATP binding site; sequence TVGGVGKT.

This sequence belongs to the LpxK family.

It catalyses the reaction a lipid A disaccharide + ATP = a lipid IVA + ADP + H(+). Its pathway is glycolipid biosynthesis; lipid IV(A) biosynthesis; lipid IV(A) from (3R)-3-hydroxytetradecanoyl-[acyl-carrier-protein] and UDP-N-acetyl-alpha-D-glucosamine: step 6/6. In terms of biological role, transfers the gamma-phosphate of ATP to the 4'-position of a tetraacyldisaccharide 1-phosphate intermediate (termed DS-1-P) to form tetraacyldisaccharide 1,4'-bis-phosphate (lipid IVA). The protein is Tetraacyldisaccharide 4'-kinase of Legionella pneumophila (strain Lens).